The following is a 503-amino-acid chain: Glycoprotein 3-alpha-L-fucosyltransferase A (503 aa).

Over 1–10 (MRRPKISLKK) the chain is Cytoplasmic. A helical; Signal-anchor for type II membrane protein membrane pass occupies residues 11–28 (YFYLTLICALLLIFGFSL). The Lumenal segment spans residues 29–503 (KEREIWKTLS…KDVISDSSDD (475 aa)). The interval 44-71 (ITTQQQQHQHLHQLQSMDEEHPMATSST) is disordered. The segment covering 47 to 58 (QQQQHQHLHQLQ) has biased composition (low complexity). N-linked (GlcNAc...) asparagine glycosylation is found at N262, N295, and N299.

Belongs to the glycosyltransferase 10 family. The cofactor is Mn(2+).

It is found in the golgi apparatus. The protein localises to the golgi stack membrane. It carries out the reaction N(4)-{beta-D-GlcNAc-(1-&gt;2)-alpha-D-Man-(1-&gt;3)-[beta-D-GlcNAc-(1-&gt;2)-alpha-D-Man-(1-&gt;6)]-beta-D-Man-(1-&gt;4)-beta-D-GlcNAc-(1-&gt;4)-beta-D-GlcNAc}-L-asparaginyl-[protein] + GDP-beta-L-fucose = N(4)-{beta-D-GlcNAc-(1-&gt;2)-alpha-D-Man-(1-&gt;3)-[beta-D-GlcNAc-(1-&gt;2)-alpha-D-Man-(1-&gt;6)]-beta-D-Man-(1-&gt;4)-beta-D-GlcNAc-(1-&gt;4)-[alpha-L-Fuc(1-&gt;3)]-beta-D-GlcNAc}-L-asparaginyl-[protein] + GDP + H(+). The protein operates within protein modification; protein glycosylation. In terms of biological role, catalyzes alpha-1,3 glycosidic linkages of N-glycans. Plays a role in neuronal development by promoting ventral nerve cord formation, possibly by promoting interactions between migrating cells and the extracellular matrix or by promoting neural activity. In Drosophila melanogaster (Fruit fly), this protein is Glycoprotein 3-alpha-L-fucosyltransferase A (FucTA).